Consider the following 276-residue polypeptide: Outer membrane lipoprotein 2 (276 aa).

Residues 1–19 (MNFKKLLGVALVSALALTA) form the signal peptide. Cys20 carries N-palmitoyl cysteine lipidation. Cys20 carries S-diacylglycerol cysteine lipidation.

It belongs to the NlpA lipoprotein family.

It is found in the cell outer membrane. The polypeptide is Outer membrane lipoprotein 2 (plpB) (Mannheimia haemolytica (Pasteurella haemolytica)).